The following is a 54-amino-acid chain: Ribulose bisphosphate carboxylase large chain (54 aa).

Residues 1–2 (MS) constitute a propeptide that is removed on maturation. Proline 3 is subject to N-acetylproline. The residue at position 14 (lysine 14) is an N6,N6,N6-trimethyllysine.

Belongs to the RuBisCO large chain family. Type I subfamily. As to quaternary structure, heterohexadecamer of 8 large chains and 8 small chains.

Its subcellular location is the plastid. It localises to the chloroplast. It carries out the reaction 2 (2R)-3-phosphoglycerate + 2 H(+) = D-ribulose 1,5-bisphosphate + CO2 + H2O. The enzyme catalyses D-ribulose 1,5-bisphosphate + O2 = 2-phosphoglycolate + (2R)-3-phosphoglycerate + 2 H(+). In terms of biological role, ruBisCO catalyzes two reactions: the carboxylation of D-ribulose 1,5-bisphosphate, the primary event in carbon dioxide fixation, as well as the oxidative fragmentation of the pentose substrate in the photorespiration process. Both reactions occur simultaneously and in competition at the same active site. The sequence is that of Ribulose bisphosphate carboxylase large chain (rbcL) from Rhamnus cathartica (Common buckthorn).